A 146-amino-acid chain; its full sequence is Hemoglobin subunit beta (146 aa).

Residues 2–146 (QWAAEEKQLI…VAHALARKYH (145 aa)) form the Globin domain. 2 residues coordinate heme b: His-63 and His-92.

It belongs to the globin family. Heterotetramer of two alpha chains and two beta chains. As to expression, red blood cells.

Functionally, involved in oxygen transport from the lung to the various peripheral tissues. The sequence is that of Hemoglobin subunit beta (HBB) from Accipiter gentilis (Northern goshawk).